Consider the following 1323-residue polypeptide: DNA-directed RNA polymerase subunit beta' (1323 aa).

Zn(2+)-binding residues include C60, C62, C75, and C78. Mg(2+)-binding residues include D535, D537, and D539. The Zn(2+) site is built by C894, C977, C984, and C987.

The protein belongs to the RNA polymerase beta' chain family. The RNAP catalytic core consists of 2 alpha, 1 beta, 1 beta' and 1 omega subunit. When a sigma factor is associated with the core the holoenzyme is formed, which can initiate transcription. Mg(2+) serves as cofactor. The cofactor is Zn(2+).

It carries out the reaction RNA(n) + a ribonucleoside 5'-triphosphate = RNA(n+1) + diphosphate. Functionally, DNA-dependent RNA polymerase catalyzes the transcription of DNA into RNA using the four ribonucleoside triphosphates as substrates. The protein is DNA-directed RNA polymerase subunit beta' of Corynebacterium urealyticum (strain ATCC 43042 / DSM 7109).